Reading from the N-terminus, the 430-residue chain is Tol-Pal system protein TolB (430 aa).

Residues 1–21 form the signal peptide; it reads MKQALRVAFGFLMLWAAVLHA.

This sequence belongs to the TolB family. The Tol-Pal system is composed of five core proteins: the inner membrane proteins TolA, TolQ and TolR, the periplasmic protein TolB and the outer membrane protein Pal. They form a network linking the inner and outer membranes and the peptidoglycan layer.

It localises to the periplasm. Part of the Tol-Pal system, which plays a role in outer membrane invagination during cell division and is important for maintaining outer membrane integrity. TolB occupies a key intermediary position in the Tol-Pal system because it communicates directly with both membrane-embedded components, Pal in the outer membrane and TolA in the inner membrane. The polypeptide is Tol-Pal system protein TolB (Salmonella enteritidis PT4 (strain P125109)).